A 645-amino-acid polypeptide reads, in one-letter code: Macrolide export ATP-binding/permease protein MacB (645 aa).

Positions Ile-6–Lys-244 constitute an ABC transporter domain. Gly-42–Ser-49 contributes to the ATP binding site. The next 4 membrane-spanning stretches (helical) occupy residues Ala-271–Gly-291, Phe-520–Met-540, Val-577–Ile-597, and Pro-608–Leu-628.

This sequence belongs to the ABC transporter superfamily. Macrolide exporter (TC 3.A.1.122) family. In terms of assembly, homodimer.

The protein localises to the cell inner membrane. Non-canonical ABC transporter that contains transmembrane domains (TMD), which form a pore in the inner membrane, and an ATP-binding domain (NBD), which is responsible for energy generation. Confers resistance against macrolides. The protein is Macrolide export ATP-binding/permease protein MacB of Hyphomonas neptunium (strain ATCC 15444).